We begin with the raw amino-acid sequence, 382 residues long: Na(+)/H(+) antiporter NhaA 2 (382 aa).

Transmembrane regions (helical) follow at residues 7–27, 28–48, 52–72, 88–108, 118–138, 147–167, 170–190, 206–226, 254–274, 285–305, 325–345, and 356–376; these read AGGV…NSYL, SGFY…AFEI, LLLW…GLEV, VLPG…YASF, GWAI…SLFG, LFLL…IALF, HELS…LFVL, LVVW…GFVI, VAYF…LGGI, LGII…VCWL, GVCL…SLAF, and VKLG…LILT.

This sequence belongs to the NhaA Na(+)/H(+) (TC 2.A.33) antiporter family.

It localises to the cell inner membrane. The enzyme catalyses Na(+)(in) + 2 H(+)(out) = Na(+)(out) + 2 H(+)(in). In terms of biological role, na(+)/H(+) antiporter that extrudes sodium in exchange for external protons. This is Na(+)/H(+) antiporter NhaA 2 from Saccharophagus degradans (strain 2-40 / ATCC 43961 / DSM 17024).